We begin with the raw amino-acid sequence, 868 residues long: DNA mismatch repair protein MutS (868 aa).

620–627 serves as a coordination point for ATP; sequence GPNMGGKS.

Belongs to the DNA mismatch repair MutS family.

In terms of biological role, this protein is involved in the repair of mismatches in DNA. It is possible that it carries out the mismatch recognition step. This protein has a weak ATPase activity. This chain is DNA mismatch repair protein MutS, found in Desulforamulus reducens (strain ATCC BAA-1160 / DSM 100696 / MI-1) (Desulfotomaculum reducens).